The chain runs to 285 residues: Diaminopimelate epimerase (285 aa).

Positions 14 and 67 each coordinate substrate. Catalysis depends on cysteine 76, which acts as the Proton donor. Substrate is bound by residues 77–78 (GN), asparagine 166, asparagine 199, and 217–218 (ER). The active-site Proton acceptor is the cysteine 226. 227–228 (GT) contributes to the substrate binding site.

It belongs to the diaminopimelate epimerase family. In terms of assembly, homodimer.

The protein resides in the cytoplasm. The enzyme catalyses (2S,6S)-2,6-diaminopimelate = meso-2,6-diaminopimelate. The protein operates within amino-acid biosynthesis; L-lysine biosynthesis via DAP pathway; DL-2,6-diaminopimelate from LL-2,6-diaminopimelate: step 1/1. Functionally, catalyzes the stereoinversion of LL-2,6-diaminopimelate (L,L-DAP) to meso-diaminopimelate (meso-DAP), a precursor of L-lysine and an essential component of the bacterial peptidoglycan. This is Diaminopimelate epimerase from Bacillus licheniformis (strain ATCC 14580 / DSM 13 / JCM 2505 / CCUG 7422 / NBRC 12200 / NCIMB 9375 / NCTC 10341 / NRRL NRS-1264 / Gibson 46).